Here is a 152-residue protein sequence, read N- to C-terminus: Nucleoside diphosphate kinase (152 aa).

The ATP site is built by K11, F59, R87, T93, R104, and N114. H117 functions as the Pros-phosphohistidine intermediate in the catalytic mechanism.

It belongs to the NDK family. As to quaternary structure, homotetramer. The cofactor is Mg(2+).

Its subcellular location is the cytoplasm. The catalysed reaction is a 2'-deoxyribonucleoside 5'-diphosphate + ATP = a 2'-deoxyribonucleoside 5'-triphosphate + ADP. It carries out the reaction a ribonucleoside 5'-diphosphate + ATP = a ribonucleoside 5'-triphosphate + ADP. Major role in the synthesis of nucleoside triphosphates other than ATP. The ATP gamma phosphate is transferred to the NDP beta phosphate via a ping-pong mechanism, using a phosphorylated active-site intermediate. The polypeptide is Nucleoside diphosphate kinase (Prochlorococcus marinus (strain MIT 9303)).